Here is a 376-residue protein sequence, read N- to C-terminus: Probable ureide permease A3 (376 aa).

At 1–9 (HLVESKGGA) the chain is on the extracellular side. Residues 10 to 30 (IACMFLALFFLGTWPALLTML) traverse the membrane as a helical segment. Topologically, residues 31–41 (ERRGRLPQHTY) are cytoplasmic. A helical transmembrane segment spans residues 42–62 (LDYSITNFFAALLIAFTFGEI). The Extracellular segment spans residues 63–80 (GKGKPDEPNFLAQLAQDN). Residues 81–101 (WPSVLFAMGGGVVLSLGNLSS) traverse the membrane as a helical segment. The Cytoplasmic segment spans residues 102-103 (QY). The helical transmembrane segment at 104–124 (AFAFVGLSVTEVITASITVVI) threads the bilayer. Residues 125–137 (GTTLNYFLDDKIN) lie on the Extracellular side of the membrane. The chain crosses the membrane as a helical span at residues 138 to 158 (KAEILFPGVGCFLIAVFLGFC). Topologically, residues 159 to 231 (RFNSSNASDN…RAIKVFGKST (73 aa)) are cytoplasmic. 223-230 (AIKVFGKS) is an ATP binding site. The chain crosses the membrane as a helical span at residues 232 to 252 (LIGLALTFSAGLCFSMFSPAF). Residues 253–274 (NLATNDQWHTLPNGIPHLTVYT) are Extracellular-facing. A helical transmembrane segment spans residues 275–295 (AFFYFSISCFVIAIILNITFL). Residues 296 to 317 (YHPVLNLPKSSLKAYLADSDGR) are Cytoplasmic-facing. The chain crosses the membrane as a helical span at residues 318–338 (IWALLAGLLCGFGNSLQFMGG). The Extracellular segment spans residues 339-376 (QAAGYQQQSLCRHFLCKHFWGVLLFGEYRRSSRKTYIC).

It belongs to the plant ureide permease (TC 2.A.7.19) family.

Its subcellular location is the membrane. Its function is as follows. Transports a wide spectrum of oxo derivatives of heterocyclic nitrogen compounds. This chain is Probable ureide permease A3 (A3), found in Vigna unguiculata (Cowpea).